Here is a 372-residue protein sequence, read N- to C-terminus: Secreted beta-glucosidase SIM1 (372 aa).

A signal peptide spans 1–15 (MKYLTLLTVLSTALA). Positions 51–85 (VTENASSGASSGETAETIQTRSSSDVSSSSDSNPV) are disordered. A compositionally biased stretch (low complexity) spans 52–85 (TENASSGASSGETAETIQTRSSSDVSSSSDSNPV). N54 and N351 each carry an N-linked (GlcNAc...) asparagine glycan.

This sequence belongs to the SUN family.

It is found in the secreted. The protein localises to the cell wall. Functionally, cell surface beta-glucosidase involved in cell wall maintenance and cytokinesis. Plays a role redundant to SUN41. This is Secreted beta-glucosidase SIM1 (SIM1) from Candida albicans (strain SC5314 / ATCC MYA-2876) (Yeast).